We begin with the raw amino-acid sequence, 391 residues long: 5-amino-6-(D-ribitylamino)uracil--L-tyrosine 4-hydroxyphenyl transferase (391 aa).

Positions 55-302 constitute a Radical SAM core domain; that stretch reads VTYVINRNIN…GAVARIYLGN (248 aa). [4Fe-4S] cluster contacts are provided by cysteine 69, cysteine 73, and cysteine 76.

The protein belongs to the radical SAM superfamily. CofH family. Consists of two subunits, CofG and CofH. The cofactor is [4Fe-4S] cluster.

The catalysed reaction is 5-amino-6-(D-ribitylamino)uracil + L-tyrosine + S-adenosyl-L-methionine = 5-amino-5-(4-hydroxybenzyl)-6-(D-ribitylimino)-5,6-dihydrouracil + 2-iminoacetate + 5'-deoxyadenosine + L-methionine + H(+). Its pathway is cofactor biosynthesis; coenzyme F0 biosynthesis. Functionally, catalyzes the radical-mediated synthesis of 5-amino-5-(4-hydroxybenzyl)-6-(D-ribitylimino)-5,6-dihydrouracil from 5-amino-6-(D-ribitylamino)uracil and L-tyrosine. The protein is 5-amino-6-(D-ribitylamino)uracil--L-tyrosine 4-hydroxyphenyl transferase of Trichormus variabilis (strain ATCC 29413 / PCC 7937) (Anabaena variabilis).